Reading from the N-terminus, the 134-residue chain is Ion transport peptide-like (134 aa).

Intrachain disulfides connect cysteine 62-cysteine 98, cysteine 78-cysteine 94, and cysteine 81-cysteine 107.

It belongs to the arthropod CHH/MIH/GIH/VIH hormone family.

Its subcellular location is the secreted. This Schistocerca gregaria (Desert locust) protein is Ion transport peptide-like.